The primary structure comprises 121 residues: Small ribosomal subunit protein uS13 (121 aa).

The disordered stretch occupies residues 93 to 121 (RNLPVRGQRTRTNARTCKGPRKSMNKQFK). The segment covering 110-121 (KGPRKSMNKQFK) has biased composition (basic residues).

This sequence belongs to the universal ribosomal protein uS13 family. Part of the 30S ribosomal subunit. Forms a loose heterodimer with protein S19. Forms two bridges to the 50S subunit in the 70S ribosome.

In terms of biological role, located at the top of the head of the 30S subunit, it contacts several helices of the 16S rRNA. In the 70S ribosome it contacts the 23S rRNA (bridge B1a) and protein L5 of the 50S subunit (bridge B1b), connecting the 2 subunits; these bridges are implicated in subunit movement. Contacts the tRNAs in the A and P-sites. This chain is Small ribosomal subunit protein uS13, found in Blochmanniella pennsylvanica (strain BPEN).